The chain runs to 215 residues: Cytochrome b6 (215 aa).

Residues 32-52 (IFYCLGGITLTCFIVQVATGF) form a helical membrane-spanning segment. Residue C35 participates in heme c binding. H86 and H100 together coordinate heme b. The next 3 membrane-spanning stretches (helical) occupy residues 90 to 110 (ASMM…TGGF), 116 to 136 (LTWV…VTGY), and 186 to 206 (AHTF…FVMI). Positions 187 and 202 each coordinate heme b.

The protein belongs to the cytochrome b family. PetB subfamily. In terms of assembly, the 4 large subunits of the cytochrome b6-f complex are cytochrome b6, subunit IV (17 kDa polypeptide, PetD), cytochrome f and the Rieske protein, while the 4 small subunits are PetG, PetL, PetM and PetN. The complex functions as a dimer. Heme b is required as a cofactor. Requires heme c as cofactor.

The protein localises to the plastid. It is found in the chloroplast thylakoid membrane. Functionally, component of the cytochrome b6-f complex, which mediates electron transfer between photosystem II (PSII) and photosystem I (PSI), cyclic electron flow around PSI, and state transitions. The chain is Cytochrome b6 from Emiliania huxleyi (Coccolithophore).